An 87-amino-acid polypeptide reads, in one-letter code: Putative regulatory protein BCQ_3657 (87 aa).

Belongs to the RemA family.

The polypeptide is Putative regulatory protein BCQ_3657 (Bacillus cereus (strain Q1)).